Here is a 95-residue protein sequence, read N- to C-terminus: Cobalt transport protein CbiN (95 aa).

2 helical membrane passes run 7–27 and 67–87; these read IMLI…SGLG and LLFA…FGYY.

The protein belongs to the CbiN family. In terms of assembly, forms an energy-coupling factor (ECF) transporter complex composed of an ATP-binding protein (A component, CbiO), a transmembrane protein (T component, CbiQ) and 2 possible substrate-capture proteins (S components, CbiM and CbiN) of unknown stoichimetry.

It localises to the cell membrane. The protein operates within cofactor biosynthesis; adenosylcobalamin biosynthesis. Part of the energy-coupling factor (ECF) transporter complex CbiMNOQ involved in cobalt import. The polypeptide is Cobalt transport protein CbiN (Methanothermobacter marburgensis (strain ATCC BAA-927 / DSM 2133 / JCM 14651 / NBRC 100331 / OCM 82 / Marburg) (Methanobacterium thermoautotrophicum)).